We begin with the raw amino-acid sequence, 2540 residues long: Probable JmjC domain-containing histone demethylation protein 2C (2540 aa).

Polar residues predominate over residues 278–309 (TRAQANSPRPAMNSQAAVPKQNTHQQQQQRSI). Residues 278–478 (TRAQANSPRP…TVSDHNSNDL (201 aa)) are disordered. Phosphoserine is present on residues Ser317 and Ser320. The segment covering 323–342 (DEEKMKEEKYDYISRGENPK) has biased composition (basic and acidic residues). The span at 343–353 (GKNKHLMNKRR) shows a compositional bias: basic residues. Over residues 354-371 (KPEEDEKKLNMKRLRTDN) the composition is skewed to basic and acidic residues. 2 positions are modified to phosphoserine: Ser373 and Ser376. Low complexity predominate over residues 373–382 (SDFSESSDSE). Basic and acidic residues-rich tracts occupy residues 383–403 (NSNK…ELKN), 410–427 (NGEE…EETL), and 438–452 (QEDK…RKSV). Polar residues predominate over residues 464–478 (SSEQSTVSDHNSNDL). 2 positions are modified to phosphoserine: Ser475 and Ser501. Position 505 is a phosphothreonine (Thr505). Residues Ser601, Ser617, Ser638, Ser639, Ser641, Ser652, and Ser943 each carry the phosphoserine modification. Residues 631 to 656 (VDTHKIKSSPSPEVVKPKITHSPDSV) are disordered. Disordered regions lie at residues 1242 to 1263 (GKVQ…SQAN) and 1614 to 1692 (NRRK…NSNT). Positions 1643–1652 (KRQPKPTYKK) are enriched in basic residues. The segment covering 1653-1669 (KQNDLQKRKGEIEEDLK) has biased composition (basic and acidic residues). Residues 1846-1871 (CDACEATLFNIHWVCQKCGFVVCLDC) form a C6-type zinc finger. Positions 1971 to 1991 (PESQQQNTPPKSEKNGGSSPE) are enriched in polar residues. The disordered stretch occupies residues 1971–2064 (PESQQQNTPP…LVSQNNEQGS (94 aa)). The residue at position 1989 (Ser1989) is a Phosphoserine. Residues 2016–2043 (AEQKAREEKKENKELTLENQIKEEREQD) show a composition bias toward basic and acidic residues. Residues 2045–2064 (SESPNGRTSPLVSQNNEQGS) are compositionally biased toward polar residues. The LXXLL motif signature appears at 2066-2070 (LRDLL). Glycyl lysine isopeptide (Lys-Gly) (interchain with G-Cter in SUMO2) cross-links involve residues Lys2132 and Lys2136. In terms of domain architecture, JmjC spans 2274-2498 (MPARYEDLLK…ESFHLTQELR (225 aa)). The Fe cation site is built by His2336, Glu2338, and His2466.

The protein belongs to the JHDM2 histone demethylase family. In terms of assembly, interacts specifically with the ligand-binding domain of the thyroid receptor (TR). Requires the presence of thyroid hormone for its interaction. Fe(2+) serves as cofactor.

Its subcellular location is the nucleus. Its function is as follows. Probable histone demethylase that specifically demethylates 'Lys-9' of histone H3, thereby playing a central role in histone code. Demethylation of Lys residue generates formaldehyde and succinate. May be involved in hormone-dependent transcriptional activation, by participating in recruitment to androgen-receptor target genes. In Homo sapiens (Human), this protein is Probable JmjC domain-containing histone demethylation protein 2C (JMJD1C).